Here is a 775-residue protein sequence, read N- to C-terminus: MAQKPDGGAGLRGFQAEASVEDSALLVQTLMEAIQISEAPPTSQATAAASGPNASPQSSQPPTANEKADTEVSAAAARPKTGFKAQNTTTKGPNDYSQARNAKEMPKNQPKVAFKSQNATSKGPHAASDFSHAASTGKSAAKKSEMAFKGQNTTTKAGPSATYNFTQSPSANEMTNNQPKTAKAWNDTTKIPGADAQTQNVNQAKMADVGTSAGISETDGAAAQTSADGSQAQNVESRTIIRGKRTRKINNLNVEENSNGDQRRASLASGNWRSAPVPVTTQNPPGAPPNVLWQTPLAWQNPSGWQNQTARQTPPARQSPPARQTPSAWQNPVAWQNPVIWPNPVIWQNPVIWPNPIVWPGPIVWPNPMAWQSTPGWQSPPSWQAPPSWQSPQDWQGPPDWQLPPDWSMPPDWSFPSDWPFPPDWIPADWPIPPDWQNLRPSPNLRSSPNSRASQNQGPPQPRDVALLQERANKLVKYLMLKDYTKVPIKRSEMLRDIIREYTDVYPEIIERACFVLEKKFGIQLKEIDKEEHLYILISTPESLAGILGTTKDTPKLGLLLVILGIIFMNGNRATEAVLWEALRKMGLRPGVRHPLLGDLRKLLTYEFVKQKYLDYRRVPNSNPPEYEFLWGLRSYHETSKMKVLRFIAEVQKRDPRDWTAQFMEAADEALDALDAAAAEAEARAEARNRMGIGDEAVSGPWSWDDIEFELLTWDEEGDFGDPWSRIPFTFWARYHQNARSRFPQAFTGPIIGPSGTATANFAANFGAIGFFWVE.

The interval 37–330 (SEAPPTSQAT…PARQTPSAWQ (294 aa)) is disordered. The segment covering 39 to 50 (APPTSQATAAAS) has biased composition (low complexity). Polar residues-rich tracts occupy residues 52–63 (PNASPQSSQPPT), 84–100 (KAQN…SQAR), 150–180 (GQNT…NQPK), 223–237 (AQTS…NVES), 250–260 (NNLNVEENSNG), and 297–330 (LAWQ…SAWQ). 19 consecutive repeat copies span residues 293–298 (WQTPLA), 299–304 (WQNPSG), 305–310 (WQNQTA), 329–334 (WQNPVA), 335–340 (WQNPVI), 341–346 (WPNPVI), 347–352 (WQNPVI), 353–358 (WPNPIV), 359–364 (WPGPIV), 365–370 (WPNPMA), 371–376 (WQSTPG), 377–382 (WQSPPS), 383–388 (WQAPPS), 389–394 (WQSPQD), 395–400 (WQGPPD), 401–406 (WQLPPD), 407–412 (WSMPPD), 413–418 (WSFPSD), and 419–424 (WPFPPD). The interval 293-441 (WQTPLAWQNP…IPPDWQNLRP (149 aa)) is 22 X 6 AA tandem repeats of W-[PQ]-X-P-X-X. The segment at 374 to 407 (TPGWQSPPSWQAPPSWQSPQDWQGPPDWQLPPDW) is disordered. Over residues 375–406 (PGWQSPPSWQAPPSWQSPQDWQGPPDWQLPPD) the composition is skewed to low complexity. A 20; approximate repeat occupies 425-429 (WIPAD). Tandem repeats lie at residues 430 to 435 (WPIPPD) and 436 to 441 (WQNLRP). A compositionally biased stretch (low complexity) spans 437 to 452 (QNLRPSPNLRSSPNSR). The tract at residues 437–463 (QNLRPSPNLRSSPNSRASQNQGPPQPR) is disordered. The MAGE domain maps to 468–666 (LQERANKLVK…RDWTAQFMEA (199 aa)).

As to quaternary structure, interacts with DLX5, DLX7 and MSX2 and forms homomultimers. Interacts with UNC5A. Interacts with TRIM28 and PJA1. Interacts with NGFR/p75NTR and RORA. Ubiquitous and in the seminiferous tubules expressed in Sertoli cells but not in germ cells. Expression decreases in all tissues with increased age and is detectable only in brain cortex and lung.

It localises to the cytoplasm. Its subcellular location is the cell membrane. The protein localises to the nucleus. Functionally, involved in the apoptotic response after nerve growth factor (NGF) binding in neuronal cells. Inhibits cell cycle progression, and facilitates NGFR-mediated apoptosis. May act as a regulator of the function of DLX family members. May enhance ubiquitin ligase activity of RING-type zinc finger-containing E3 ubiquitin-protein ligases. Proposed to act through recruitment and/or stabilization of the Ubl-conjugating enzyme (E2) at the E3:substrate complex. Plays a role in the circadian rhythm regulation. May act as RORA co-regulator, modulating the expression of core clock genes such as BMAL1 and NFIL3, induced, or NR1D1, repressed. This chain is Melanoma-associated antigen D1 (Maged1), found in Rattus norvegicus (Rat).